A 123-amino-acid polypeptide reads, in one-letter code: Large ribosomal subunit protein bL20 (123 aa).

The protein belongs to the bacterial ribosomal protein bL20 family.

Its function is as follows. Binds directly to 23S ribosomal RNA and is necessary for the in vitro assembly process of the 50S ribosomal subunit. It is not involved in the protein synthesizing functions of that subunit. This Pseudothermotoga lettingae (strain ATCC BAA-301 / DSM 14385 / NBRC 107922 / TMO) (Thermotoga lettingae) protein is Large ribosomal subunit protein bL20.